The chain runs to 432 residues: Aspartate aminotransferase (432 aa).

45–46 contacts substrate; that stretch reads RG. Residue 109–111 coordinates pyridoxal 5'-phosphate; the sequence is SSL. A substrate-binding site is contributed by 148 to 150; sequence YDR. Residues asparagine 197, tyrosine 229, and 262-265 contribute to the pyridoxal 5'-phosphate site; that span reads STSK. Arginine 400 is a binding site for substrate.

This sequence belongs to the class-I pyridoxal-phosphate-dependent aminotransferase family. Homodimer. Requires pyridoxal 5'-phosphate as cofactor.

It catalyses the reaction L-aspartate + 2-oxoglutarate = oxaloacetate + L-glutamate. In Corynebacterium glutamicum (strain ATCC 13032 / DSM 20300 / JCM 1318 / BCRC 11384 / CCUG 27702 / LMG 3730 / NBRC 12168 / NCIMB 10025 / NRRL B-2784 / 534), this protein is Aspartate aminotransferase.